Consider the following 467-residue polypeptide: Glycosyl hydrolase family 109 protein (467 aa).

Residues 1–31 constitute a signal peptide (tat-type signal); that stretch reads MKNFNRRAFLKAAGATTAGLVTSGLILPASA. NAD(+) contacts are provided by residues 66–67, Asp-88, 137–140, 157–158, and Asn-186; these read QR, WQWH, and EV. Substrate contacts are provided by residues Tyr-215, Arg-234, 246–249, and Tyr-328; that span reads YPTH. Tyr-246 lines the NAD(+) pocket.

Belongs to the Gfo/Idh/MocA family. Glycosyl hydrolase 109 subfamily. The cofactor is NAD(+). Post-translationally, predicted to be exported by the Tat system. The position of the signal peptide cleavage has not been experimentally proven.

Its function is as follows. Glycosidase. The sequence is that of Glycosyl hydrolase family 109 protein from Shewanella woodyi (strain ATCC 51908 / MS32).